Reading from the N-terminus, the 175-residue chain is Transcription factor HES-3 (175 aa).

Residues 1-49 (MEKKRRARINVSLEQLRSLLERHYSHQIRKRKLEKADILELSVKYMRSL) form the bHLH domain. The region spanning 65 to 98 (YPSGFQGGLRGVSQRLRPGEGDSGLRCPLLLQRR) is the Orange domain. A disordered region spans residues 126–166 (RAAGGSHSPQSPLPLPGGLLESSTDVVAPHPASNCQAESTR). A compositionally biased stretch (low complexity) spans 129-148 (GGSHSPQSPLPLPGGLLESS). The short motif at 172–175 (WRPW) is the WRPW motif element.

Transcription repression requires formation of a complex with a corepressor protein of the Groucho/TLE family.

The protein resides in the nucleus. Its function is as follows. Transcriptional repressor of genes that require a bHLH protein for their transcription. The polypeptide is Transcription factor HES-3 (Hes3) (Mus musculus (Mouse)).